The following is a 601-amino-acid chain: Nuclear receptor subfamily 2 group C member 1 (601 aa).

The tract at residues methionine 1–methionine 179 is required for interaction with KAT2B. Positions phenylalanine 111–cysteine 186 form a DNA-binding region, nuclear receptor. 2 consecutive NR C4-type zinc fingers follow at residues cysteine 114–cysteine 134 and cysteine 150–cysteine 169. Phosphoserine occurs at positions 198 and 216. Residue threonine 221 is modified to Phosphothreonine. Threonine 223 is subject to Phosphothreonine; by MAPK1. A Glycyl lysine isopeptide (Lys-Gly) (interchain with G-Cter in SUMO); alternate cross-link involves residue lysine 251. Residue lysine 251 forms a Glycyl lysine isopeptide (Lys-Gly) (interchain with G-Cter in SUMO2); alternate linkage. The region spanning glycine 349–glutamate 591 is the NR LBD domain. Serine 582 carries the post-translational modification Phosphoserine; by PKC. The tract at residues proline 585–leucine 601 is required for interaction with NRIP1. Lysine 589 is covalently cross-linked (Glycyl lysine isopeptide (Lys-Gly) (interchain with G-Cter in SUMO2)).

Belongs to the nuclear hormone receptor family. NR2 subfamily. As to quaternary structure, homodimer. Heterodimer; with NR2C2 which is required for chromatin remodeling and for binding to promoter regions such as globin DR1 repeats. Interacts with ESR1; the interaction prevents homodimerization of ESR1 and suppresses its transcriptional activity and cell growth. Interacts with NRIP1 (via its LXXLL motifs); the interaction provides corepressor activity. Interacts with HDAC3 (via the DNA-binding domain); the interaction recruits phosphorylated NR2C1 to PML bodies for sumoylation. Interacts with HDAC4 (via the DNA-binding domain). Interacts with PIAS1; the interaction is required for sumoylation of NR2C1. Interacts with UBE2I; the interaction is required for sumoylation of NR2C1. Interacts with KAT2B; the interaction acts as a corepressor of gene expression. Sumoylation requires both PIAS1 and UBE2I. Sumoylation appears to dissociate NR2C1 from the PML nuclear bodies. Enhances the interaction with NRIP1 but inhibits interaction with KAT2B. In proliferating cells, stimulation by all-trans retinoic acid, activation of MAPK1-mediated phosphorylation and recruitment to PML bodies with subsequent sumoylation, suppresses OCT4 expression. In terms of processing, phosphorylated on several serine and threonine residues. Phosphorylation on Thr-223, stimulated by all-trans retinoic acid (atRA) mediates PML location and sumoylation in proliferating cells which then modulates its association with effector molecules, KAT2B and NRIP1. Phosphorylation on Ser-582 by PKC is important for protein stability and function as activator of RARB.

Its subcellular location is the nucleus. It is found in the PML body. Functionally, orphan nuclear receptor. Binds the IR7 element in the promoter of its own gene in an autoregulatory negative feedback mechanism. Primarily repressor of a broad range of genes including ESR1 and RARB. Together with NR2C2, forms the core of the DRED (direct repeat erythroid-definitive) complex that represses embryonic and fetal globin transcription. Binds to hormone response elements (HREs) consisting of two 5'-AGGTCA-3' half site direct repeat consensus sequences. Also activator of OCT4 gene expression. Plays a fundamental role in early embryogenesis and regulates embryonic stem cell proliferation and differentiation. Mediator of retinoic acid-regulated preadipocyte proliferation. In Pongo abelii (Sumatran orangutan), this protein is Nuclear receptor subfamily 2 group C member 1 (NR2C1).